Reading from the N-terminus, the 961-residue chain is Retinoblastoma-like protein homolog lin-35 (961 aa).

2 disordered regions span residues 1–43 and 55–129; these read MPKR…PPAK and GGVQ…TPPP. Over residues 68 to 81 the composition is skewed to polar residues; it reads ELTQMTIKQETEGN. Positions 107 to 119 are enriched in acidic residues; that stretch reads GEDDDYEEDDADS. S714 bears the Phosphoserine; by CDK4 mark. At T719 the chain carries Phosphothreonine; by CDK4.

It belongs to the retinoblastoma protein (RB) family. Component of the DRM complex, at least composed of lin-9, lin-35, lin-37, lin-52, lin-53, lin-54, dpl-1 and efl-1. Interacts with lin-53. Interacts (via C-terminus) with dpl-1 (via C-terminus) and efl-1 (via C-terminus). Interacts (via C-terminus) with lin-8. In terms of processing, phosphorylated by the cyclin dependent kinase cdk-4. Phosphorylation inhibits the transcriptional repressor activity of lin-35 and allows for progression through the G1 phase of the cell cycle during postembryonic development.

Its subcellular location is the nucleus. In terms of biological role, key regulator of cell division which acts as a transcriptional repressor and negatively regulates cell cycle progression in its active unphosphorylated form, but allows cell cycle progression when phosphorylated. When unphosphorylated and in its active form, interacts with E2F transcription factors such as efl-1 to repress their transcriptional activity and negatively regulate the progression through the G1 phase of the cell cycle during postembryonic development. May furthermore act with cell cycle regulator cki-1 to negatively regulate cell cycle progression. Acts redundantly with lin-53, fzr-1 and lin-23 to control cell cycle progression by regulating the expression of G1 phase cyclins. In particular, negatively regulates the expression of the cyclin E homolog cye-1, which is essential for the G1/S phase transition. Regulates cell division in the intestinal lineage, repressing the expression of genes such as cdc-25.2, which are required for intestinal cells to transition from the karyokinesis cell cycle (also known as nuclear division) to endoreplication, a specific growth pathway in the intestinal epithelium required for feeding and gut development in growing larvae during the L1 stage molt. Its role as a transcriptional repressor in the regulation of intestinal cell division during postembryonic development is most likely in complex with an E2F cell cycle regulatory transcription factor efl-1 and its binding partner the synthetic multivulva class B protein dpl-1. Synthetic multivulva (synMuv) class B protein. SynMuv proteins are required to repress the induction of vulval development by Ras signaling and probably act by forming the multiprotein DRM complex that represses transcription. Together with synMuv class B protein lin-53, and redundantly with synMuv class A protein lin-15A, represses transcription to control vulval development, most likely through antagonization of the Ras-signaling pathway in the major hypodermal syncytium hyp7. Acts redundantly with the transcriptional corepressor spr-1 and the zinc finger protein zfp-2 to play a role in vulval morphogenesis, promote germline proliferation and somatic gonad development. Acts redundantly with ubc-18 in the regulation of pharyngeal morphogenesis during embryonic development by negatively regulating the expression of proteins such as sup-35. Functions with the SWI/SNF complex and proteins such as pha-1 to regulate larval development. Functions redundantly with xnp-1 to regulate somatic gonad development. Acts redundantly with slr-2 to regulate the expression of intestinal genes required for nutrient utilization. Regulates transcription in response to starvation. Furthermore, in response to starvation, promotes germ cell programmed cell death by negatively regulating the expression of the anti-apoptotic protein ced-9. Conversely, in conjunction with mcd-1, efl-1 and the synthetic multivulva class B proteins dpl-1, lin-37 and lin-52, may also regulate transcription to promote programmed cell death independently of ced-1, ced-8 and ced-9 cell death pathways. Directly involved in heterochromatin formation by maintaining overall chromatin structure and, in particular, that of constitutive heterochromatin by stabilizing histone methylation. In particular, negatively regulates the expression of mes-4, a histone methyltransferase that controls the expression of germline specific genes. May play a role in double strand break formation during meiosis. May suppress sensitivity to RNAi. May play a role in the response to endoplasmic reticulum (ER) stress. This is Retinoblastoma-like protein homolog lin-35 from Caenorhabditis elegans.